A 484-amino-acid chain; its full sequence is HSPB1-associated protein 1 (484 aa).

Positions Met1 to Lys26 are disordered. An interaction with HSPB1 region spans residues Glu88 to Arg208. The region spanning Trp124–Thr288 is the JmjC domain. The interval Thr396 to Gln429 is disordered.

As to quaternary structure, interacts with CRYAB and HSPB1.

It is found in the cytoplasm. In terms of biological role, may play a role in cellular stress response. The chain is HSPB1-associated protein 1 (HSPBAP1) from Bos taurus (Bovine).